The chain runs to 485 residues: Ribulose bisphosphate carboxylase large chain (485 aa).

Substrate contacts are provided by Asn-124 and Thr-174. Catalysis depends on Lys-176, which acts as the Proton acceptor. Position 178 (Lys-178) interacts with substrate. Residues Lys-202, Asp-204, and Glu-205 each contribute to the Mg(2+) site. Lys-202 carries the post-translational modification N6-carboxylysine. The active-site Proton acceptor is the His-294. Residues Arg-295, His-327, and Ser-379 each contribute to the substrate site.

It belongs to the RuBisCO large chain family. Type I subfamily. In terms of assembly, heterohexadecamer of 8 large chains and 8 small chains. Requires Mg(2+) as cofactor.

The catalysed reaction is 2 (2R)-3-phosphoglycerate + 2 H(+) = D-ribulose 1,5-bisphosphate + CO2 + H2O. It carries out the reaction D-ribulose 1,5-bisphosphate + O2 = 2-phosphoglycolate + (2R)-3-phosphoglycerate + 2 H(+). RuBisCO catalyzes two reactions: the carboxylation of D-ribulose 1,5-bisphosphate, the primary event in carbon dioxide fixation, as well as the oxidative fragmentation of the pentose substrate. Both reactions occur simultaneously and in competition at the same active site. In Rhodopseudomonas palustris (strain BisA53), this protein is Ribulose bisphosphate carboxylase large chain.